The sequence spans 198 residues: Cyclotides mra4/mra5 (198 aa).

A signal peptide spans 1–22 (MESNKMVVGVLLIAAFALPALA). A propeptide spanning residues 23 to 79 (LFERDVITHETIEAVLKKSTPNSNTMLQEDAINALTGKTLISQTILEETLLKNGVVG) is cleaved from the precursor. 3 disulfide bridges follow: Cys84/Cys100, Cys88/Cys102, and Cys93/Cys107. Residues 111 to 163 (SLALPTLEKDVITPEALEAVLKSNGGAIVNTKTIISNAIFEETLLNNANHVLG) constitute a propeptide that is removed on maturation. 3 cysteine pairs are disulfide-bonded: Cys167-Cys183, Cys171-Cys185, and Cys176-Cys190. A propeptide spanning residues 194–198 (SLALN) is cleaved from the precursor.

It belongs to the cyclotide family. Bracelet subfamily. These are cyclic peptides. In terms of processing, the mature peptides contain 3 disulfide bonds each.

In terms of biological role, probably participates in a plant defense mechanism. This is Cyclotides mra4/mra5 from Melicytus ramiflorus (Whitey wood).